Reading from the N-terminus, the 407-residue chain is Serine hydroxymethyltransferase (407 aa).

Residues leucine 120 and 124–126 (GHL) each bind (6S)-5,6,7,8-tetrahydrofolate. An N6-(pyridoxal phosphate)lysine modification is found at lysine 229.

The protein belongs to the SHMT family. As to quaternary structure, homodimer. It depends on pyridoxal 5'-phosphate as a cofactor.

It is found in the cytoplasm. It carries out the reaction (6R)-5,10-methylene-5,6,7,8-tetrahydrofolate + glycine + H2O = (6S)-5,6,7,8-tetrahydrofolate + L-serine. The protein operates within one-carbon metabolism; tetrahydrofolate interconversion. It functions in the pathway amino-acid biosynthesis; glycine biosynthesis; glycine from L-serine: step 1/1. Its function is as follows. Catalyzes the reversible interconversion of serine and glycine with tetrahydrofolate (THF) serving as the one-carbon carrier. This reaction serves as the major source of one-carbon groups required for the biosynthesis of purines, thymidylate, methionine, and other important biomolecules. Also exhibits THF-independent aldolase activity toward beta-hydroxyamino acids, producing glycine and aldehydes, via a retro-aldol mechanism. The chain is Serine hydroxymethyltransferase from Deinococcus deserti (strain DSM 17065 / CIP 109153 / LMG 22923 / VCD115).